Reading from the N-terminus, the 334-residue chain is NAD-dependent protein deacetylase sirtuin-3 (334 aa).

The region spanning S53–T315 is the Deacetylase sirtuin-type domain. The residue at position 57 (K57) is an N6-succinyllysine. Residues G80–Y100 and Q163–D166 contribute to the NAD(+) site. The active-site Proton acceptor is the H183. C191, C194, C215, and C218 together coordinate Zn(2+). NAD(+) contacts are provided by residues G254–S256 and N279–D281.

This sequence belongs to the sirtuin family. Class I subfamily. As to quaternary structure, upon metabolic stress, forms a complex composed of FOXO3, SIRT3 and mitochondrial RNA polymerase POLRMT; the complex is recruited to mtDNA in a SIRT3-dependent manner. Also forms a complex composed of FOXO3, SIRT3, TFAM and POLRMT. Interacts with NDUFA9, ACSS1, IDH2 and GDH. Interacts with PCCA. Zn(2+) serves as cofactor. As to expression, expressed in cardiomyocytes (at protein level). Expressed in the brain, liver, kidney and testes. Expressed in skeletal muscles (at protein level).

It is found in the mitochondrion matrix. Its subcellular location is the cytoplasm. It catalyses the reaction N(6)-acetyl-L-lysyl-[protein] + NAD(+) + H2O = 2''-O-acetyl-ADP-D-ribose + nicotinamide + L-lysyl-[protein]. It carries out the reaction N(6)-[(S)-lactoyl]-L-lysyl-[protein] + NAD(+) + H2O = 2''-O-(S)-lactoyl-ADP-D-ribose + nicotinamide + L-lysyl-[protein]. In terms of biological role, NAD-dependent protein deacetylase. Activates or deactivates mitochondrial target proteins by deacetylating key lysine residues. Known targets include ACSS1, IDH, GDH, PDHA1, SOD2, LCAD, SDHA, MRPL12 and the ATP synthase subunit ATP5PO. Contributes to the regulation of the cellular energy metabolism. Important for regulating tissue-specific ATP levels. In response to metabolic stress, deacetylates transcription factor FOXO3 and recruits FOXO3 and mitochondrial RNA polymerase POLRMT to mtDNA to promote mtDNA transcription. Acts as a regulator of ceramide metabolism by mediating deacetylation of ceramide synthases CERS1, CERS2 and CERS6, thereby increasing their activity and promoting mitochondrial ceramide accumulation. Regulates hepatic lipogenesis. Uses NAD(+) substrate imported by SLC25A47, triggering downstream activation of PRKAA1/AMPK-alpha signaling cascade that ultimately downregulates sterol regulatory element-binding protein (SREBP) transcriptional activities and ATP-consuming lipogenesis to restore cellular energy balance. In addition to protein deacetylase activity, also acts as a protein-lysine deacylase by mediating delactylation of proteins, such as CCNE2 and 'Lys-16' of histone H4 (H4K16la). This Mus musculus (Mouse) protein is NAD-dependent protein deacetylase sirtuin-3.